A 71-amino-acid polypeptide reads, in one-letter code: Brevinin-1CG4 (71 aa).

The first 22 residues, 1-22, serve as a signal peptide directing secretion; that stretch reads MFTLKKSLLLLFFLGTINLSLC. The propeptide at 23–45 is removed in mature form; it reads EQERNADEEERRDDSDKRDVEVE. Cysteines 65 and 71 form a disulfide.

Belongs to the frog skin active peptide (FSAP) family. Brevinin subfamily. In terms of tissue distribution, expressed by the skin glands.

The protein localises to the secreted. In terms of biological role, antimicrobial peptide active against a variety of Gram-positive and some Gram-negative bacterial strains. Has antifungal activity against C.albicans ATCC 10231 and a slime mold isolate. Has hemolytic activity against human erythrocytes. The protein is Brevinin-1CG4 of Amolops chunganensis (Chungan torrent frog).